A 124-amino-acid chain; its full sequence is MATINQLVRTPRVKQVVKSNVPALEACPQKRGVCTRVYTTTPKKPNSALRKVCRVRLTNGFEVTSYIGGEGHNLQEHSVVLIRGGRVKDLPGVRYHTVRGALDCAGVNDRKKGRSKYGVKRPKS.

Residue Asp-89 is modified to 3-methylthioaspartic acid.

The protein belongs to the universal ribosomal protein uS12 family. In terms of assembly, part of the 30S ribosomal subunit. Contacts proteins S8 and S17. May interact with IF1 in the 30S initiation complex.

With S4 and S5 plays an important role in translational accuracy. Functionally, interacts with and stabilizes bases of the 16S rRNA that are involved in tRNA selection in the A site and with the mRNA backbone. Located at the interface of the 30S and 50S subunits, it traverses the body of the 30S subunit contacting proteins on the other side and probably holding the rRNA structure together. The combined cluster of proteins S8, S12 and S17 appears to hold together the shoulder and platform of the 30S subunit. The chain is Small ribosomal subunit protein uS12 from Vibrio atlanticus (strain LGP32) (Vibrio splendidus (strain Mel32)).